A 644-amino-acid chain; its full sequence is Arabinosyltransferase XEG113 (644 aa).

Residues 1–17 (MVEGWRNGFRDATNSKP) are Cytoplasmic-facing. The helical; Signal-anchor for type II membrane protein transmembrane segment at 18–38 (LFVTIYATVIIGVLVSSFYVF) threads the bilayer. At 39–644 (SAIYSPTNGS…QTPEEDHPPL (606 aa)) the chain is on the lumenal side. Asn-46 and Asn-70 each carry an N-linked (GlcNAc...) asparagine glycan. A DXD motif motif is present at residues 226–228 (DTD). N-linked (GlcNAc...) asparagine glycans are attached at residues Asn-446 and Asn-542.

This sequence belongs to the glycosyltransferase 77 family.

The protein localises to the golgi apparatus membrane. Plays a role in the arabinosylation of cell wall components. Involved in the arabinosylation of extensin proteins in root hair cells. Extensins are structural glycoproteins present in cell walls and its arabinosylation is important for cell elongation, root hair cell development, lateral root development and root hair tip growth. This is Arabinosyltransferase XEG113 from Arabidopsis thaliana (Mouse-ear cress).